Consider the following 127-residue polypeptide: Holo-[acyl-carrier-protein] synthase (127 aa).

Mg(2+) contacts are provided by aspartate 9 and glutamate 58.

This sequence belongs to the P-Pant transferase superfamily. AcpS family. The cofactor is Mg(2+).

It localises to the cytoplasm. The enzyme catalyses apo-[ACP] + CoA = holo-[ACP] + adenosine 3',5'-bisphosphate + H(+). Transfers the 4'-phosphopantetheine moiety from coenzyme A to a Ser of acyl-carrier-protein. This Shewanella sp. (strain MR-7) protein is Holo-[acyl-carrier-protein] synthase.